The chain runs to 354 residues: Putative cinnamyl alcohol dehydrogenase 4 (354 aa).

Cysteine 47, histidine 69, glutamate 70, cysteine 100, cysteine 103, cysteine 106, cysteine 114, and cysteine 163 together coordinate Zn(2+). NADP(+) contacts are provided by residues threonine 167, 188 to 193, 211 to 216, threonine 251, and 297 to 299; these read GLGGLG, STSESK, and SVT.

Belongs to the zinc-containing alcohol dehydrogenase family. In terms of assembly, homodimer. The cofactor is Zn(2+).

The enzyme catalyses (E)-cinnamyl alcohol + NADP(+) = (E)-cinnamaldehyde + NADPH + H(+). It carries out the reaction (E)-coniferol + NADP(+) = (E)-coniferaldehyde + NADPH + H(+). The catalysed reaction is (E)-sinapyl alcohol + NADP(+) = (E)-sinapaldehyde + NADPH + H(+). It catalyses the reaction (E)-4-coumaroyl alcohol + NADP(+) = (E)-4-coumaraldehyde + NADPH + H(+). The enzyme catalyses (E)-caffeyl alcohol + NADP(+) = (E)-caffeyl aldehyde + NADPH + H(+). It participates in aromatic compound metabolism; phenylpropanoid biosynthesis. In terms of biological role, involved in lignin biosynthesis. Catalyzes the final step specific for the production of lignin monomers. Catalyzes the NADPH-dependent reduction of coniferaldehyde, 5-hydroxyconiferaldehyde, sinapaldehyde, 4-coumaraldehyde and caffeyl aldehyde to their respective alcohols. The protein is Putative cinnamyl alcohol dehydrogenase 4 of Oryza sativa subsp. japonica (Rice).